Here is a 250-residue protein sequence, read N- to C-terminus: UPF0193 protein EVG1 homolog (250 aa).

Positions 86-110 (ESLRNGEPLPLPEPPRPNTNNDPDK) are disordered.

Belongs to the UPF0193 (EVG1) family.

This Drosophila melanogaster (Fruit fly) protein is UPF0193 protein EVG1 homolog.